A 178-amino-acid polypeptide reads, in one-letter code: PRA1 family protein 2 (178 aa).

Topologically, residues Met-1–Leu-41 are cytoplasmic. The helical transmembrane segment at Leu-42–Ile-62 threads the bilayer. Residues Arg-63–Pro-64 are Extracellular-facing. A helical transmembrane segment spans residues Leu-65–Ala-85. Topologically, residues Glu-86 to Arg-96 are cytoplasmic. A helical transmembrane segment spans residues Ser-97–Gly-119. Residues Ala-120–Thr-122 are Extracellular-facing. A helical transmembrane segment spans residues Phe-123–Leu-140. The Cytoplasmic segment spans residues Arg-141–Ser-178.

The protein belongs to the PRA1 family. In terms of assembly, interacts with CCR5 and GDE1.

The protein resides in the endosome membrane. In terms of biological role, may be involved in ER/Golgi transport and vesicular traffic. Plays a proapoptotic role in cerulenin-induced neuroblastoma apoptosis. In Mus musculus (Mouse), this protein is PRA1 family protein 2 (Praf2).